We begin with the raw amino-acid sequence, 113 residues long: Dolichyl-diphosphooligosaccharide--protein glycosyltransferase subunit DAD1 (113 aa).

Ser2 bears the N-acetylserine mark. Topologically, residues Ser2–Tyr30 are cytoplasmic. The chain crosses the membrane as a helical span at residues Leu31–Phe51. Residue Pro52 is a topological domain, lumenal. The chain crosses the membrane as a helical span at residues Phe53–Leu73. Over Arg74 to Arg92 the chain is Cytoplasmic. Residues Ala93–Gly113 traverse the membrane as a helical segment.

It belongs to the DAD/OST2 family. In terms of assembly, component of the oligosaccharyltransferase (OST) complex. OST exists in two different complex forms which contain common core subunits RPN1, RPN2, OST48, OST4, DAD1 and TMEM258, either STT3A or STT3B as catalytic subunits, and form-specific accessory subunits. STT3A complex assembly occurs through the formation of 3 subcomplexes. Subcomplex 1 contains RPN1 and TMEM258, subcomplex 2 contains the STT3A-specific subunits STT3A, DC2/OSTC, and KCP2 as well as the core subunit OST4, and subcomplex 3 contains RPN2, DAD1, and OST48. The STT3A complex can form stable complexes with the Sec61 complex or with both the Sec61 and TRAP complexes.

The protein localises to the endoplasmic reticulum membrane. The protein operates within protein modification; protein glycosylation. In terms of biological role, subunit of the oligosaccharyl transferase (OST) complex that catalyzes the initial transfer of a defined glycan (Glc(3)Man(9)GlcNAc(2) in eukaryotes) from the lipid carrier dolichol-pyrophosphate to an asparagine residue within an Asn-X-Ser/Thr consensus motif in nascent polypeptide chains, the first step in protein N-glycosylation. N-glycosylation occurs cotranslationally and the complex associates with the Sec61 complex at the channel-forming translocon complex that mediates protein translocation across the endoplasmic reticulum (ER). All subunits are required for a maximal enzyme activity. The chain is Dolichyl-diphosphooligosaccharide--protein glycosyltransferase subunit DAD1 from Mus musculus (Mouse).